A 219-amino-acid polypeptide reads, in one-letter code: Inner membrane protein YghB (219 aa).

At 1-17 (MAVIQDIIAALWQHDFA) the chain is on the cytoplasmic side. A helical membrane pass occupies residues 18–38 (ALADPHIVSVVYFVMFATLFL). Residues 39–67 (ENGLLPASFLPGDSLLILAGALIAQGVMD) are Periplasmic-facing. Residues 68–88 (FLPTIAILTAAASLGCWLSYI) traverse the membrane as a helical segment. The Cytoplasmic segment spans residues 89-160 (QGRWLGNTKT…RRFQFFNWLS (72 aa)). A helical transmembrane segment spans residues 161–181 (GLLWVSVVTSFGYALSMIPFV). Residues 182–191 (KRHEDQVMTF) are Periplasmic-facing. The helical transmembrane segment at 192–212 (LMILPIALLTAGLLGTLFVVI) threads the bilayer. Over 213 to 219 (KKKYCNA) the chain is Cytoplasmic.

This sequence belongs to the DedA family.

It is found in the cell inner membrane. In Escherichia coli O6:H1 (strain CFT073 / ATCC 700928 / UPEC), this protein is Inner membrane protein YghB (yghB).